Reading from the N-terminus, the 269-residue chain is Thyroxine 5-deiodinase (269 aa).

The Cytoplasmic segment spans residues 1–14 (MLPAPHTCCRLLQQ). The chain crosses the membrane as a helical; Signal-anchor for type II membrane protein span at residues 15–35 (LLACCLLLPRFLLTVLLLWLL). Over 36 to 269 (DFPCVRRRVI…TGNGALVIQV (234 aa)) the chain is Extracellular. Residue U133 is part of the active site. U133 is a non-standard amino acid (selenocysteine).

This sequence belongs to the iodothyronine deiodinase family. Monomer. Homodimer. May undergo minor heretodimerization with DIO1 and DIO2.

It is found in the cell membrane. The protein localises to the endosome membrane. The enzyme catalyses 3,3',5'-triiodo-L-thyronine + iodide + A + H(+) = L-thyroxine + AH2. The catalysed reaction is 3,3'-diiodo-L-thyronine + iodide + A + H(+) = 3,3',5-triiodo-L-thyronine + AH2. It carries out the reaction 3-iodo-L-thyronine + iodide + A + H(+) = 3,5-diiodo-L-thyronine + AH2. It catalyses the reaction L-thyronine + iodide + A + H(+) = 3-iodo-L-thyronine + AH2. The enzyme catalyses 3',5'-diiodo-L-thyronine + iodide + A + H(+) = 3,3',5'-triiodo-L-thyronine + AH2. The catalysed reaction is 3'-iodo-L-thyronine + iodide + A + H(+) = 3,3'-diiodo-L-thyronine + AH2. It carries out the reaction 3,3',5'-triiodothyronamine + iodide + A + H(+) = 3,3',5,5'-tetraiodothyronamine + AH2. It catalyses the reaction 3',5'-diiodothyronamine + iodide + A + H(+) = 3,3',5'-triiodothyronamine + AH2. The enzyme catalyses 3,3'-diiodothyronamine + iodide + A + H(+) = 3,3',5-triiodothyronamine + AH2. The catalysed reaction is 3-iodothyronamine + iodide + A + H(+) = 3,5-diiodothyronamine + AH2. It carries out the reaction 3'-iodothyronamine + iodide + A + H(+) = 3,3'-diiodothyronamine + AH2. It catalyses the reaction thyronamine + iodide + A + H(+) = 3-iodothyronamine + AH2. Its function is as follows. Plays a crucial role in the metabolism of thyroid hormones (TH) and has specific roles in TH activation and inactivation by deiodination. Catalyzes the deiodination of L-thyroxine (T4) to 3,3',5'-triiodothyronine (rT3), 3,5-diiodothyronine (3,5-T2) to 3-monoiodothyronine (3-T1), rT3 to 3',5'-diiodothyronine (3',5'-T2) and 3,3'-diiodothyronine (3,3'-T2) to 3'-monoiodothyronine (3'-T1) via inner-ring deiodination (IRD). Catalyzes the deiodination of 3,5,3'-triiodothyronine (T3) to 3,3'-diiodothyronine (3,3'-T2) via IRD. Catalyzes the deiodination of 3-T1 to L-thyronine (T0) via outer-ring deiodination (ORD). Catalyzes the tyrosyl ring deiodinations of 3,3',5,5'-tetraiodothyronamine, 3,3',5'-triiodothyronamine, 3,5,3'-triiodothyronamine, 3,5-diiodothyronamine, 3,3'-diiodothyronamine and 3-iodothyronamine. This chain is Thyroxine 5-deiodinase (dio3), found in Aquarana catesbeiana (American bullfrog).